The following is a 331-amino-acid chain: Probable allantoicase (331 aa).

It belongs to the allantoicase family.

The catalysed reaction is allantoate + H2O = (S)-ureidoglycolate + urea. It participates in nitrogen metabolism; (S)-allantoin degradation; (S)-ureidoglycolate from allantoate (aminidohydrolase route): step 1/1. In Pseudomonas fluorescens (strain SBW25), this protein is Probable allantoicase.